A 725-amino-acid chain; its full sequence is Dolichyl-phosphate-mannose--protein mannosyltransferase 5 (725 aa).

6 helical membrane passes run 34–54 (QFAV…LYIP), 117–137 (YLWL…LTFF), 145–165 (SVIS…VTVS), 192–212 (IPFT…LGLN), 219–239 (GLFT…EILG), and 256–276 (VVAF…IHFE). MIR domains lie at 303–356 (PLQV…IETK), 368–427 (QREV…IRML), and 439–495 (LIKL…VESS). Residue Asn409 is glycosylated (N-linked (GlcNAc...) asparagine). 4 consecutive transmembrane segments (helical) span residues 570-590 (IYYL…LIAI), 619-639 (FYNN…PYCL), 644-664 (LYLH…SQYL), and 673-693 (IIGG…FYEF).

This sequence belongs to the glycosyltransferase 39 family.

It localises to the endoplasmic reticulum membrane. It carries out the reaction a di-trans,poly-cis-dolichyl beta-D-mannosyl phosphate + L-seryl-[protein] = 3-O-(alpha-D-mannosyl)-L-seryl-[protein] + a di-trans,poly-cis-dolichyl phosphate + H(+). The enzyme catalyses a di-trans,poly-cis-dolichyl beta-D-mannosyl phosphate + L-threonyl-[protein] = 3-O-(alpha-D-mannosyl)-L-threonyl-[protein] + a di-trans,poly-cis-dolichyl phosphate + H(+). It participates in protein modification; protein glycosylation. Protein mannosyltransferase (PMT) involved in hyphal morphogenesis and drug sensitivity. Transfers mannose from Dol-P-mannose to Ser or Thr residues on proteins. PMT1, PMT2 and PMT4 account for most of the protein-O-glycosylation activity, while PMT5 and PMT6 may specifically modulate a much narrower spectrum of target proteins. Required for biofilm formation. This Candida albicans (strain SC5314 / ATCC MYA-2876) (Yeast) protein is Dolichyl-phosphate-mannose--protein mannosyltransferase 5.